Reading from the N-terminus, the 467-residue chain is Glycogen synthase kinase-3 (467 aa).

Residues 1–20 (MSSKDQILEKDKKETDDNGN) show a composition bias toward basic and acidic residues. The interval 1-42 (MSSKDQILEKDKKETDDNGNKKTTTTTSSSSSSSSSSKPRSN) is disordered. The span at 23 to 37 (TTTTTSSSSSSSSSS) shows a compositional bias: low complexity. Residues 56–339 (YITEGVIGNG…PVEICAHPFF (284 aa)) form the Protein kinase domain. ATP contacts are provided by residues 62 to 70 (IGNGSFGVV) and Lys-85. Asp-179 functions as the Proton acceptor in the catalytic mechanism. Phosphotyrosine; by zakA is present on residues Tyr-214 and Tyr-220. The tract at residues 400-467 (SSNQSSSSNS…TTTTTTTSNH (68 aa)) is disordered.

It belongs to the protein kinase superfamily. CMGC Ser/Thr protein kinase family. GSK-3 subfamily. It depends on Mg(2+) as a cofactor.

It catalyses the reaction L-seryl-[tau protein] + ATP = O-phospho-L-seryl-[tau protein] + ADP + H(+). The catalysed reaction is L-threonyl-[tau protein] + ATP = O-phospho-L-threonyl-[tau protein] + ADP + H(+). Its activity is regulated as follows. Inhibited by lithium. Lithium inhibition is competitive with respect to magnesium but non-competitive with respect to the peptide substrate. In terms of biological role, during cellular differentiation, may mediate an extracellular cyclic AMP stimulated signal transduction pathway that regulates prespore and prestalk B-cell proportions through inhibition of stalk cell formation and induction of prespore cell differentiation. The cAMP receptor carC appears to activate gskA via the tyrosine kinases zakA and zak2, to stimulate prespore differentiation, while carD appears to negatively regulate gskA, to promote prestalk formation. This chain is Glycogen synthase kinase-3 (gskA), found in Dictyostelium discoideum (Social amoeba).